Reading from the N-terminus, the 336-residue chain is Galactinol synthase 6 (336 aa).

Residue lysine 106 is part of the active site. 3 residues coordinate Mn(2+): aspartate 122, aspartate 124, and histidine 260.

Belongs to the glycosyltransferase 8 family. Galactosyltransferase subfamily. The cofactor is a divalent metal cation.

The protein resides in the cytoplasm. It catalyses the reaction myo-inositol + UDP-alpha-D-galactose = alpha-D-galactosyl-(1-&gt;3)-1D-myo-inositol + UDP + H(+). Functionally, galactinol synthase involved in the biosynthesis of raffinose family oligosaccharides (RFOs) that function as osmoprotectants. May promote plant stress tolerance. The sequence is that of Galactinol synthase 6 (GOLS6) from Arabidopsis thaliana (Mouse-ear cress).